The primary structure comprises 383 residues: 1-deoxy-D-xylulose 5-phosphate reductoisomerase (383 aa).

Residues T10, G11, S12, I13, G36, K37, N38, and N122 each coordinate NADPH. Residue K123 participates in 1-deoxy-D-xylulose 5-phosphate binding. E124 contributes to the NADPH binding site. Residue D148 participates in Mn(2+) binding. 1-deoxy-D-xylulose 5-phosphate contacts are provided by S149, E150, S174, and H197. A Mn(2+)-binding site is contributed by E150. NADPH is bound at residue G203. 1-deoxy-D-xylulose 5-phosphate is bound by residues S210, N215, K216, and E219. E219 lines the Mn(2+) pocket.

It belongs to the DXR family. It depends on Mg(2+) as a cofactor. Requires Mn(2+) as cofactor.

The catalysed reaction is 2-C-methyl-D-erythritol 4-phosphate + NADP(+) = 1-deoxy-D-xylulose 5-phosphate + NADPH + H(+). The protein operates within isoprenoid biosynthesis; isopentenyl diphosphate biosynthesis via DXP pathway; isopentenyl diphosphate from 1-deoxy-D-xylulose 5-phosphate: step 1/6. Functionally, catalyzes the NADPH-dependent rearrangement and reduction of 1-deoxy-D-xylulose-5-phosphate (DXP) to 2-C-methyl-D-erythritol 4-phosphate (MEP). The sequence is that of 1-deoxy-D-xylulose 5-phosphate reductoisomerase from Bacillus licheniformis (strain ATCC 14580 / DSM 13 / JCM 2505 / CCUG 7422 / NBRC 12200 / NCIMB 9375 / NCTC 10341 / NRRL NRS-1264 / Gibson 46).